The chain runs to 227 residues: Ubiquitin domain-containing protein 1 (227 aa).

Residues Met1 to Met42 form a disordered region. A compositionally biased stretch (basic and acidic residues) spans Gly24–Ser38. Residues Phe149–Pro224 enclose the Ubiquitin-like domain.

In terms of assembly, interacts with UBTD1.

Functionally, may be involved in the regulation of cellular senescence through a positive feedback loop with TP53. Is a TP53 downstream target gene that increases the stability of TP53 protein by promoting the ubiquitination and degradation of MDM2. The chain is Ubiquitin domain-containing protein 1 (Ubtd1) from Mus musculus (Mouse).